The chain runs to 66 residues: Large ribosomal subunit protein bL35 (66 aa).

Composition is skewed to basic residues over residues 1–16 (MPKQ…RFKR) and 31–45 (HRFH…RQLR). The segment at 1–52 (MPKQKTHRASAKRFKRTGNGGLKRSNAYTSHRFHGKTKKQRRQLRKASMVSA) is disordered.

The protein belongs to the bacterial ribosomal protein bL35 family.

The sequence is that of Large ribosomal subunit protein bL35 from Ligilactobacillus salivarius (strain UCC118) (Lactobacillus salivarius).